The sequence spans 75 residues: Dermaseptin-SP3 (75 aa).

The first 22 residues, 1-22, serve as a signal peptide directing secretion; sequence MAFLKKSLFLVLFLGLVSLSMC. Positions 23–45 are excised as a propeptide; it reads EEEKRENEVEEEQEDDEQSELRR. P72 is subject to Proline amide. A propeptide spanning residues 74 to 75 is cleaved from the precursor; the sequence is EQ.

This sequence belongs to the frog skin active peptide (FSAP) family. Dermaseptin subfamily. Expressed by the skin glands.

The protein localises to the secreted. It localises to the target cell membrane. In terms of biological role, antimicrobial peptide with activity against Gram-positive and Gram-negative bacteria and fungi. Has been tested against E.coli (MIC=47.50-128 uM), S.aureus (MIC=189.98-512 uM), K.pneumoniae (MIC&gt;189.98 uM) and C.albicans (MIC&gt;189.98 uM). Probably acts by disturbing membrane functions with its alpha-helical amphipathic structure. May penetrate bacterial membranes, but stay at the mammalian membrane surface. Shows a very weak hemolytic activity. The sequence is that of Dermaseptin-SP3 from Agalychnis spurrelli (Gliding leaf frog).